The chain runs to 1267 residues: RNA-directed RNA polymerase lambda-3 (1267 aa).

In terms of domain architecture, RdRp catalytic spans 555–792 (LSPTSGSAVI…KLYFIFGCRI (238 aa)).

Belongs to the reoviridae RNA-directed RNA polymerase family.

It localises to the virion. The enzyme catalyses RNA(n) + a ribonucleoside 5'-triphosphate = RNA(n+1) + diphosphate. Functionally, RNA-directed RNA polymerase that is involved in transcription and genome replication. Following infection, it catalyzes the synthesis of fully conservative plus strands. After core assembly, which consists in recruitment of one capped plus-strand for each genomic segments and polymerase complexes, the polymerase switches mode and catalyzes the synthesis of complementary minus-strands. This is RNA-directed RNA polymerase lambda-3 (L1) from Reovirus type 3 (strain Dearing) (T3D).